The chain runs to 335 residues: NADH-quinone oxidoreductase subunit H (335 aa).

8 consecutive transmembrane segments (helical) span residues 11-31 (VILTVIKAIVILLAVVVAGAL), 81-101 (VIFTLAPVVAMSALLIAFAII), 114-134 (IGLLFFFAMAGLSVYAVLFAG), 154-174 (VSYEVFMGLALMGIVVQVGSF), 187-207 (LWFIIPQFFGFCTFFIAGVAV), 238-258 (FFVGEYIGIILISALLVTLFF), 270-290 (QLSFVWFALKTAFFILLFILL), and 307-327 (WKFCLPLTLINLLVTAAIVLW).

It belongs to the complex I subunit 1 family. As to quaternary structure, NDH-1 is composed of 13 different subunits. Subunits NuoA, H, J, K, L, M, N constitute the membrane sector of the complex.

The protein localises to the cell inner membrane. It catalyses the reaction a quinone + NADH + 5 H(+)(in) = a quinol + NAD(+) + 4 H(+)(out). Its function is as follows. NDH-1 shuttles electrons from NADH, via FMN and iron-sulfur (Fe-S) centers, to quinones in the respiratory chain. The immediate electron acceptor for the enzyme in this species is believed to be ubiquinone. Couples the redox reaction to proton translocation (for every two electrons transferred, four hydrogen ions are translocated across the cytoplasmic membrane), and thus conserves the redox energy in a proton gradient. This subunit may bind ubiquinone. The protein is NADH-quinone oxidoreductase subunit H of Pseudomonas fluorescens (strain Pf0-1).